Reading from the N-terminus, the 101-residue chain is Large ribosomal subunit protein uL23 (101 aa).

It belongs to the universal ribosomal protein uL23 family. Part of the 50S ribosomal subunit. Contacts protein L29, and trigger factor when it is bound to the ribosome.

Its function is as follows. One of the early assembly proteins it binds 23S rRNA. One of the proteins that surrounds the polypeptide exit tunnel on the outside of the ribosome. Forms the main docking site for trigger factor binding to the ribosome. This is Large ribosomal subunit protein uL23 from Paenarthrobacter aurescens (strain TC1).